Here is a 118-residue protein sequence, read N- to C-terminus: ATP-dependent Clp protease adapter protein ClpS (118 aa).

The disordered stretch occupies residues 1-24 (MNGSSNSGSPGGGQTGDDDGTGFD).

The protein belongs to the ClpS family. Binds to the N-terminal domain of the chaperone ClpA.

Involved in the modulation of the specificity of the ClpAP-mediated ATP-dependent protein degradation. This Hyphomonas neptunium (strain ATCC 15444) protein is ATP-dependent Clp protease adapter protein ClpS.